A 169-amino-acid chain; its full sequence is Large ribosomal subunit protein uL10 (169 aa).

It belongs to the universal ribosomal protein uL10 family. As to quaternary structure, part of the ribosomal stalk of the 50S ribosomal subunit. The N-terminus interacts with L11 and the large rRNA to form the base of the stalk. The C-terminus forms an elongated spine to which L12 dimers bind in a sequential fashion forming a multimeric L10(L12)X complex.

Functionally, forms part of the ribosomal stalk, playing a central role in the interaction of the ribosome with GTP-bound translation factors. The protein is Large ribosomal subunit protein uL10 of Orientia tsutsugamushi (strain Boryong) (Rickettsia tsutsugamushi).